Reading from the N-terminus, the 378-residue chain is Probable endopolygalacturonase AFUB_016610 (378 aa).

A signal peptide spans 1–19 (MLKLMGSLVLLASAAEVIA). Positions 20 to 35 (SPAAEPVAPSTTLEKR) are excised as a propeptide. Cys-38 and Cys-56 form a disulfide bridge. PbH1 repeat units lie at residues 147-169 (TSSS…SING), 170-200 (CDGL…DIGS), and 201-222 (SSNI…AVNS). Residue Asp-215 is the Proton donor of the active site. Cys-217 and Cys-233 form a disulfide bridge. His-237 is a catalytic residue. 2 PbH1 repeats span residues 252-273 (VENV…RIKA) and 281-303 (IKGV…LIEQ). Asn-254 is a glycosylation site (N-linked (GlcNAc...) asparagine). Residue Asn-327 is glycosylated (N-linked (GlcNAc...) asparagine). A disulfide bridge links Cys-345 with Cys-350. N-linked (GlcNAc...) asparagine glycosylation occurs at Asn-352. The cysteines at positions 369 and 378 are disulfide-linked.

It belongs to the glycosyl hydrolase 28 family.

It is found in the secreted. It catalyses the reaction (1,4-alpha-D-galacturonosyl)n+m + H2O = (1,4-alpha-D-galacturonosyl)n + (1,4-alpha-D-galacturonosyl)m.. Involved in maceration and soft-rotting of plant tissue. Hydrolyzes the 1,4-alpha glycosidic bonds of de-esterified pectate in the smooth region of the plant cell wall. The polypeptide is Probable endopolygalacturonase AFUB_016610 (Aspergillus fumigatus (strain CBS 144.89 / FGSC A1163 / CEA10) (Neosartorya fumigata)).